Consider the following 451-residue polypeptide: MEQQSQLERLGLFDARVPRYTSYPTAPHFTPAVGEPVFRDWIAAIPAGAAISLYMHVPFCRRLCWFCACRTQGTQSDEPVRAYAKALLAELDMLKSALAPGVRLSRLHWGGGTPTLMPAEMMRLVAGAVLDAFPLAEGAEFSVEIDPNEIDEARMDALAEAGLNRASIGVQDFDPEIQKIIGREQSFEVTKRAVDMIRDRGIASLNADILYGLPHQDPHRIAESVQKLLALSPDRVALYGYAHVPWMAKRQVMIPSEALPDPHGRLRLFETARELFLADGYDEIGIDHFARPGDGLARAQKAGLLRRNFQGYTDDRAEVLVGLGASSISRFPQGYAQNAPATGAHLARIRDGRFSTTRGHAFSAEDRWRSRMIEALMCDFEIRAEEFIRDHGFDAESLSRILTPVAAHFGDMVDADASGLRITPRGRPLTRMIARMFDGYDMAASGHSAAI.

The 234-residue stretch at 45–278 (IPAGAAISLY…FETARELFLA (234 aa)) folds into the Radical SAM core domain. Position 54 (Tyr54) interacts with S-adenosyl-L-methionine. [4Fe-4S] cluster is bound by residues Cys60 and Cys64. Phe66 contributes to the S-adenosyl-L-methionine binding site. Cys67 provides a ligand contact to [4Fe-4S] cluster. S-adenosyl-L-methionine contacts are provided by residues Gly111, 112 to 113 (GT), Glu144, Gln171, Arg183, Asp208, Ala242, and Ile328.

It belongs to the anaerobic coproporphyrinogen-III oxidase family. As to quaternary structure, monomer. [4Fe-4S] cluster serves as cofactor.

Its subcellular location is the cytoplasm. It catalyses the reaction coproporphyrinogen III + 2 S-adenosyl-L-methionine = protoporphyrinogen IX + 2 5'-deoxyadenosine + 2 L-methionine + 2 CO2. Its pathway is porphyrin-containing compound metabolism; protoporphyrin-IX biosynthesis; protoporphyrinogen-IX from coproporphyrinogen-III (AdoMet route): step 1/1. Its function is as follows. Involved in the heme biosynthesis. Catalyzes the anaerobic oxidative decarboxylation of propionate groups of rings A and B of coproporphyrinogen III to yield the vinyl groups in protoporphyrinogen IX. The protein is Oxygen-independent coproporphyrinogen III oxidase (hemN) of Paracoccus denitrificans (strain Pd 1222).